The primary structure comprises 123 residues: Large ribosomal subunit protein bL20 (123 aa).

It belongs to the bacterial ribosomal protein bL20 family.

Binds directly to 23S ribosomal RNA and is necessary for the in vitro assembly process of the 50S ribosomal subunit. It is not involved in the protein synthesizing functions of that subunit. The protein is Large ribosomal subunit protein bL20 of Chlamydia trachomatis serovar L2b (strain UCH-1/proctitis).